A 707-amino-acid polypeptide reads, in one-letter code: D-(-)-3-hydroxybutyrate oligomer hydrolase (707 aa).

The first 32 residues, 1 to 32 (MASVFKVRSASGHVPVVRTLAAMMAVTVVLTA), serve as a signal peptide directing secretion. Ser-321 functions as the Charge relay system in the catalytic mechanism.

The protein belongs to the D-(-)-3-hydroxybutyrate oligomer hydrolase family.

Its subcellular location is the secreted. It catalyses the reaction (3R)-hydroxybutanoate dimer + H2O = 2 (R)-3-hydroxybutanoate + H(+). The protein operates within lipid metabolism; butanoate metabolism. Its function is as follows. Participates in the degradation of poly-3-hydroxybutyrate (PHB). It works downstream of poly(3-hydroxybutyrate) depolymerase, hydrolyzing D(-)-3-hydroxybutyrate oligomers of various length (3HB-oligomers) into 3HB-monomers. This Paraburkholderia xenovorans (strain LB400) protein is D-(-)-3-hydroxybutyrate oligomer hydrolase.